The following is a 417-amino-acid chain: Argininosuccinate synthase (417 aa).

9–17 provides a ligand contact to ATP; the sequence is AYSGGLDTS. An L-citrulline-binding site is contributed by Tyr-87. Gly-117 lines the ATP pocket. 3 residues coordinate L-aspartate: Thr-119, Asn-123, and Asp-124. Asn-123 is an L-citrulline binding site. The L-citrulline site is built by Arg-127, Ser-175, Ser-184, Glu-260, and Tyr-272.

This sequence belongs to the argininosuccinate synthase family. Type 1 subfamily. In terms of assembly, homotetramer.

The protein resides in the cytoplasm. The enzyme catalyses L-citrulline + L-aspartate + ATP = 2-(N(omega)-L-arginino)succinate + AMP + diphosphate + H(+). It functions in the pathway amino-acid biosynthesis; L-arginine biosynthesis; L-arginine from L-ornithine and carbamoyl phosphate: step 2/3. The polypeptide is Argininosuccinate synthase (Oceanobacillus iheyensis (strain DSM 14371 / CIP 107618 / JCM 11309 / KCTC 3954 / HTE831)).